Here is a 1141-residue protein sequence, read N- to C-terminus: DNA-directed RNA polymerase subunit beta (1141 aa).

It belongs to the RNA polymerase beta chain family. The RNAP catalytic core consists of 2 alpha, 1 beta, 1 beta' and 1 omega subunit. When a sigma factor is associated with the core the holoenzyme is formed, which can initiate transcription.

It carries out the reaction RNA(n) + a ribonucleoside 5'-triphosphate = RNA(n+1) + diphosphate. DNA-dependent RNA polymerase catalyzes the transcription of DNA into RNA using the four ribonucleoside triphosphates as substrates. This chain is DNA-directed RNA polymerase subunit beta, found in Frankia alni (strain DSM 45986 / CECT 9034 / ACN14a).